The primary structure comprises 407 residues: Multifunctional CCA protein (407 aa).

Positions 8 and 11 each coordinate ATP. G8 and R11 together coordinate CTP. Mg(2+) is bound by residues D21 and D23. Residues R91, R137, and R140 each coordinate ATP. CTP-binding residues include R91, R137, and R140. Residues 228–329 enclose the HD domain; that stretch reads TGIHTLMVAQ…IKIFDKMDVW (102 aa).

Belongs to the tRNA nucleotidyltransferase/poly(A) polymerase family. Bacterial CCA-adding enzyme type 1 subfamily. As to quaternary structure, monomer. Can also form homodimers and oligomers. The cofactor is Mg(2+). Ni(2+) is required as a cofactor.

It carries out the reaction a tRNA precursor + 2 CTP + ATP = a tRNA with a 3' CCA end + 3 diphosphate. The enzyme catalyses a tRNA with a 3' CCA end + 2 CTP + ATP = a tRNA with a 3' CCACCA end + 3 diphosphate. Catalyzes the addition and repair of the essential 3'-terminal CCA sequence in tRNAs without using a nucleic acid template. Adds these three nucleotides in the order of C, C, and A to the tRNA nucleotide-73, using CTP and ATP as substrates and producing inorganic pyrophosphate. tRNA 3'-terminal CCA addition is required both for tRNA processing and repair. Also involved in tRNA surveillance by mediating tandem CCA addition to generate a CCACCA at the 3' terminus of unstable tRNAs. While stable tRNAs receive only 3'-terminal CCA, unstable tRNAs are marked with CCACCA and rapidly degraded. This chain is Multifunctional CCA protein, found in Aliivibrio fischeri (strain ATCC 700601 / ES114) (Vibrio fischeri).